Consider the following 281-residue polypeptide: Sulfur carrier protein FdhD (281 aa).

Cysteine 117 functions as the Cysteine persulfide intermediate in the catalytic mechanism.

Belongs to the FdhD family.

It is found in the cytoplasm. Functionally, required for formate dehydrogenase (FDH) activity. Acts as a sulfur carrier protein that transfers sulfur from IscS to the molybdenum cofactor prior to its insertion into FDH. The protein is Sulfur carrier protein FdhD of Xanthomonas campestris pv. campestris (strain 8004).